We begin with the raw amino-acid sequence, 200 residues long: MARCKS-related protein (200 aa).

The tract at residues 1–200 is disordered; it reads MGSQSSKAPR…PTPASAEQNE (200 aa). A lipid anchor (N-myristoyl glycine) is attached at G2. T14 carries the phosphothreonine modification. Residues 16 to 26 show a composition bias toward low complexity; that stretch reads EEAAGASPAKA. Phosphoserine is present on residues S22, S36, and S48. Over residues 53-64 the composition is skewed to low complexity; the sequence is GTDEAAGATGDA. The residue at position 71 (S71) is a Phosphoserine. Positions 74–85 are enriched in basic and acidic residues; sequence AEAKGEVAPKET. At T85 the chain carries Phosphothreonine. A compositionally biased stretch (basic residues) spans 86–98; sequence PKKKKKFSFKKPF. The effector domain involved in lipid-binding and calmodulin-binding stretch occupies residues 87–110; it reads KKKKKFSFKKPFKLSGLSFKRNRK. Residues S93, S101, and S104 each carry the phosphoserine; by PKC modification. The residue at position 119 (S119) is a Phosphoserine. A Phosphoserine; by MAPK8 modification is found at S120. 2 positions are modified to phosphoserine: S132 and S135. Phosphothreonine; by MAPK8 is present on T148. 3 positions are modified to phosphoserine: S151, S162, and S165. Positions 156–165 are enriched in low complexity; sequence AKGAEASAAS. At T170 the chain carries Phosphothreonine. Positions 178-200 are enriched in low complexity; sequence AAEPSTPSGPESGPTPASAEQNE. T183 is subject to Phosphothreonine; by MAPK8. A Phosphothreonine modification is found at T192.

It belongs to the MARCKS family. Binds to filamentous actin (F-actin), but not to monomeric G-actin, independently of its phosphorylation status. Interacts with calmodulin. In terms of processing, phosphorylated. Phosphorylation at Ser-120 and Thr-183 is non-redundantly catalyzed by MAPK8 in vivo. Phosphorylation at Thr-148 is preferentially catalyzed by MAPK8 in vivo, but this modification can also be catalyzed by other kinases in the absence of MAPK8. May be phosphorylated by protein kinase C, which disrupts the interaction with calmodulin. In terms of tissue distribution, expressed at high levels in brain cortex and hippocampus, including dentate gyrus, anterior olfactory nucleus, primary olfactory cortex, entorhinal cortex, medial preoptic area and dorsomedial hypothalamic nucleus (at protein level). Expressed in neuronal cells (at protein level). Detected in the retina. Strongly expressed in testis and uterus; expressed at lower levels in cerebellum, cerebrum, adipose tissue, spleen, kidney, thyroid, liver, lung, skeletal muscle and heart. Detected in T-cells and B-cells.

The protein resides in the cytoplasm. It localises to the cytoskeleton. Its subcellular location is the cell membrane. In terms of biological role, involved in the control of cell movement by regulating actin cytoskeleton homeostasis and filopodium and lamellipodium formation. When unphosphorylated, induces cell migration. When phosphorylated by MAPK8, induces actin bundles formation and stabilization, thereby reducing actin plasticity, hence restricting cell movement, including neuronal migration. May be involved in coupling the protein kinase C and calmodulin signal transduction systems. The protein is MARCKS-related protein (Marcksl1) of Mus musculus (Mouse).